A 396-amino-acid polypeptide reads, in one-letter code: Protein NDRG1-A (396 aa).

The tract at residues 326 to 396 is disordered; it reads RSRTGSAASS…NSPKSMEVSC (71 aa). The span at 327-340 shows a compositional bias: low complexity; the sequence is SRTGSAASSSSQDG. Repeat copies occupy residues 340-349, 350-359, 360-369, and 370-379. A 4 X 10 AA tandem repeats of G-[NS]-R-S-R-[AS]-H-T-[DGN]-[DET] region spans residues 340-379; it reads GNRSRSHTNEGSRSRSHTGDGNRSRAHTGDGNRSRSHTDT. Residues 346–377 are compositionally biased toward basic and acidic residues; the sequence is HTNEGSRSRSHTGDGNRSRAHTGDGNRSRSHT. Polar residues predominate over residues 378–390; it reads DTNNINSDQNSPK.

The protein belongs to the NDRG family.

Functionally, may be involved in pronephros development, after specification of the pronephros. The polypeptide is Protein NDRG1-A (ndrg1-a) (Xenopus laevis (African clawed frog)).